The primary structure comprises 158 residues: Glycine/sarcosine/betaine reductase complex component A1 (158 aa).

The active site involves Sec44. Residue Sec44 is a non-standard amino acid, selenocysteine.

Belongs to the GrdA family. As to quaternary structure, monomer. Component of the glycine, sarcosine and betaine reductase complexes, together with components B and C.

It carries out the reaction acetyl phosphate + [thioredoxin]-disulfide + NH4(+) + H2O = [thioredoxin]-dithiol + glycine + phosphate + H(+). The enzyme catalyses acetyl phosphate + methylamine + [thioredoxin]-disulfide + H2O = sarcosine + [thioredoxin]-dithiol + phosphate + H(+). The catalysed reaction is acetyl phosphate + trimethylamine + [thioredoxin]-disulfide + H2O = glycine betaine + [thioredoxin]-dithiol + phosphate + H(+). Its function is as follows. In the first step of glycine, betaine and sarcosine reductases, the substrate is bound to component PB via a Schiff base intermediate. Then the PB-activated substrate is nucleophilically attacked by the selenol anion of component PA to transform it to a carboxymethylated selenoether and the respective amine. By action of component PC, acetyl phosphate is formed, leaving component PA in its oxidized state. Finally component PA becomes reduced by the thioredoxin system to start a new catalytic cycle of reductive deamination. The polypeptide is Glycine/sarcosine/betaine reductase complex component A1 (grdA1) (Peptoclostridium acidaminophilum (Eubacterium acidaminophilum)).